The primary structure comprises 90 residues: MARSLKKGPFADDHLLKKVDEAIAKNSRKPIKTWSRRSTIFPQFVGLTFLVHNGKIFNEVYVTDDMVGHKLGEFSPTRTYHGHGKDKAKK.

This sequence belongs to the universal ribosomal protein uS19 family.

Its function is as follows. Protein S19 forms a complex with S13 that binds strongly to the 16S ribosomal RNA. The sequence is that of Small ribosomal subunit protein uS19 from Mesomycoplasma hyopneumoniae (strain 232) (Mycoplasma hyopneumoniae).